Consider the following 658-residue polypeptide: Glycine--tRNA ligase beta subunit (658 aa).

Belongs to the class-II aminoacyl-tRNA synthetase family. In terms of assembly, tetramer of two alpha and two beta subunits.

It localises to the cytoplasm. The enzyme catalyses tRNA(Gly) + glycine + ATP = glycyl-tRNA(Gly) + AMP + diphosphate. The sequence is that of Glycine--tRNA ligase beta subunit from Rickettsia bellii (strain OSU 85-389).